A 173-amino-acid polypeptide reads, in one-letter code: Superoxide dismutase [Cu-Zn] (173 aa).

Positions 1–19 (MKRFSLAILALVVATGAQA) are cleaved as a signal peptide. Cu cation-binding residues include H67, H69, and H92. The segment at 72–113 (GSCQPATKDGKASAAESAGGHLDPQNTGKHEGPEGAGHLGDL) is disordered. A disulfide bond links C74 and C169. Zn(2+) is bound by residues H92, H101, H109, and D112. Residue H147 coordinates Cu cation.

Belongs to the Cu-Zn superoxide dismutase family. As to quaternary structure, monomer. Requires Cu cation as cofactor. It depends on Zn(2+) as a cofactor.

The protein localises to the periplasm. It catalyses the reaction 2 superoxide + 2 H(+) = H2O2 + O2. In terms of biological role, destroys radicals which are normally produced within the cells and which are toxic to biological systems. This is Superoxide dismutase [Cu-Zn] (sodC) from Escherichia coli O157:H7.